Here is a 134-residue protein sequence, read N- to C-terminus: Large ribosomal subunit protein eL14y (134 aa).

This sequence belongs to the eukaryotic ribosomal protein eL14 family.

This chain is Large ribosomal subunit protein eL14y (RPL14B), found in Arabidopsis thaliana (Mouse-ear cress).